Reading from the N-terminus, the 367-residue chain is Dye-decolorizing peroxidase (367 aa).

The Proton acceptor role is filled by Asp152. His225 provides a ligand contact to heme. The segment at 311–367 is disordered; it reads DPDGELAAAEPSDAQNDDPASASARIEETDPPNPASADDPAPADDSLGIGSLRRRDQ. Positions 345–356 are enriched in low complexity; it reads ASADDPAPADDS. The tract at residues 358 to 365 is targeting peptide; sequence GIGSLRRR.

This sequence belongs to the DyP-type peroxidase family. Homohexamer. The cofactor is heme b.

It is found in the encapsulin nanocompartment. In terms of biological role, cargo protein of a type 1 encapsulin nanocompartment. Has both general peroxidase activity and dye-decolorizing activity. Can catalyze the oxidation of both protoporphyrinogen IX and coproporphyrinogen III to their corresponding porphyrins. Also efficiently decolorizes the dyes alizarin red and Cibacron blue F3GA. This cargo-loaded encapsulin nanocompartment is probably involved in protection against oxidative damage. This is Dye-decolorizing peroxidase from Brevibacterium linens.